Reading from the N-terminus, the 647-residue chain is Threonine--tRNA ligase (647 aa).

Residues 1–60 (MQVTIEDQSLEAAAGEACGQVLSRAVSGKRLKNAVACLVDGQPRDLAFPLPEDAHELALV) form the TGS domain. Residues 242–533 (DHRKLGAQLD…LIEHTAGALP (292 aa)) are catalytic. Positions 334, 385, and 510 each coordinate Zn(2+).

Belongs to the class-II aminoacyl-tRNA synthetase family. As to quaternary structure, homodimer. Zn(2+) serves as cofactor.

It is found in the cytoplasm. The catalysed reaction is tRNA(Thr) + L-threonine + ATP = L-threonyl-tRNA(Thr) + AMP + diphosphate + H(+). In terms of biological role, catalyzes the attachment of threonine to tRNA(Thr) in a two-step reaction: L-threonine is first activated by ATP to form Thr-AMP and then transferred to the acceptor end of tRNA(Thr). Also edits incorrectly charged L-seryl-tRNA(Thr). This is Threonine--tRNA ligase from Solidesulfovibrio magneticus (strain ATCC 700980 / DSM 13731 / RS-1) (Desulfovibrio magneticus).